The chain runs to 295 residues: Acetyl-coenzyme A carboxylase carboxyl transferase subunit beta (295 aa).

Residues 25–294 (VWTKCTSCEQ…PFNAEELSDT (270 aa)) enclose the CoA carboxyltransferase N-terminal domain. The Zn(2+) site is built by Cys29, Cys32, Cys48, and Cys51. The segment at 29 to 51 (CTSCEQVLYRDELKRHLEVCPKC) adopts a C4-type zinc-finger fold.

This sequence belongs to the AccD/PCCB family. Acetyl-CoA carboxylase is a heterohexamer composed of biotin carboxyl carrier protein (AccB), biotin carboxylase (AccC) and two subunits each of ACCase subunit alpha (AccA) and ACCase subunit beta (AccD). The cofactor is Zn(2+).

The protein localises to the cytoplasm. It catalyses the reaction N(6)-carboxybiotinyl-L-lysyl-[protein] + acetyl-CoA = N(6)-biotinyl-L-lysyl-[protein] + malonyl-CoA. It functions in the pathway lipid metabolism; malonyl-CoA biosynthesis; malonyl-CoA from acetyl-CoA: step 1/1. Component of the acetyl coenzyme A carboxylase (ACC) complex. Biotin carboxylase (BC) catalyzes the carboxylation of biotin on its carrier protein (BCCP) and then the CO(2) group is transferred by the transcarboxylase to acetyl-CoA to form malonyl-CoA. The chain is Acetyl-coenzyme A carboxylase carboxyl transferase subunit beta from Mannheimia succiniciproducens (strain KCTC 0769BP / MBEL55E).